Consider the following 199-residue polypeptide: Acireductone dioxygenase 3 (199 aa).

His99, His101, Glu105, and His144 together coordinate Fe(2+). Ni(2+)-binding residues include His99, His101, Glu105, and His144.

It belongs to the acireductone dioxygenase (ARD) family. Fe(2+) serves as cofactor. Requires Ni(2+) as cofactor.

Its subcellular location is the cytoplasm. The protein localises to the nucleus. It catalyses the reaction 1,2-dihydroxy-5-(methylsulfanyl)pent-1-en-3-one + O2 = 4-methylsulfanyl-2-oxobutanoate + formate + 2 H(+). The enzyme catalyses 1,2-dihydroxy-5-(methylsulfanyl)pent-1-en-3-one + O2 = 3-(methylsulfanyl)propanoate + CO + formate + 2 H(+). The protein operates within amino-acid biosynthesis; L-methionine biosynthesis via salvage pathway; L-methionine from S-methyl-5-thio-alpha-D-ribose 1-phosphate: step 5/6. Catalyzes 2 different reactions between oxygen and the acireductone 1,2-dihydroxy-3-keto-5-methylthiopentene (DHK-MTPene) depending upon the metal bound in the active site. Fe-containing acireductone dioxygenase (Fe-ARD) produces formate and 2-keto-4-methylthiobutyrate (KMTB), the alpha-ketoacid precursor of methionine in the methionine recycle pathway. Ni-containing acireductone dioxygenase (Ni-ARD) produces methylthiopropionate, carbon monoxide and formate, and does not lie on the methionine recycle pathway. The protein is Acireductone dioxygenase 3 (ARD3) of Arabidopsis thaliana (Mouse-ear cress).